The following is a 492-amino-acid chain: 5-taurinomethyluridine-[tRNA] synthase subunit GTPB3, mitochondrial (492 aa).

The transit peptide at 1–20 directs the protein to the mitochondrion; sequence MWRGLSALVTRPASAPLRLC. Residues Arg-52, Glu-112, and Lys-152 each coordinate 5,10-methylenetetrahydrofolate. The region spanning 249–416 is the TrmE-type G domain; it reads GANVVVAGPP…LLQALKTELA (168 aa). Residues 256–263, 282–286, 303–306, and 374–377 each bind GTP; these read GPPNAGKS, GTTRD, DTAG, and NKSD. Asn-259 contributes to the K(+) binding site. Residues Ser-263 and Thr-284 each contribute to the Mg(2+) site. Lys-492 contacts 5,10-methylenetetrahydrofolate.

This sequence belongs to the TRAFAC class TrmE-Era-EngA-EngB-Septin-like GTPase superfamily. TrmE GTPase family. Homodimer; forms a dimer in the presence of potassium. Interacts with MTO1; forms the GTPBP3-MTO1 complex composed of homodimers of GTPBP3 and MTO1. It depends on K(+) as a cofactor.

It is found in the mitochondrion. The catalysed reaction is GTP + H2O = GDP + phosphate + H(+). Its function is as follows. GTPase component of the GTPBP3-MTO1 complex that catalyzes the 5-taurinomethyluridine (taum(5)U) modification at the 34th wobble position (U34) of mitochondrial tRNAs (mt-tRNAs), which plays a role in mt-tRNA decoding and mitochondrial translation. Taum(5)U formation on mammalian mt-tRNA requires the presence of both GTPBP3-mediated GTPase activity and MTO1 catalytic activity. This chain is 5-taurinomethyluridine-[tRNA] synthase subunit GTPB3, mitochondrial, found in Rattus norvegicus (Rat).